Reading from the N-terminus, the 788-residue chain is Integrin beta-6 (788 aa).

The first 21 residues, 1–21 (MGIELLCLFFLFLGRNDHVQG), serve as a signal peptide directing secretion. Residues 22 to 71 (GCALGGAETCEDCLLIGPQCAWCSQENFTYLSGVGERCDTPANLLAKGCQ) enclose the PSI domain. Residues 22-709 (GCALGGAETC…KDCPKPPNSP (688 aa)) lie on the Extracellular side of the membrane. 28 disulfides stabilise this stretch: Cys23-Cys41, Cys31-Cys454, Cys34-Cys59, Cys44-Cys70, Cys197-Cys204, Cys252-Cys293, Cys394-Cys406, Cys426-Cys452, Cys456-Cys476, Cys467-Cys479, Cys481-Cys490, Cys492-Cys519, Cys502-Cys517, Cys511-Cys522, Cys524-Cys537, Cys539-Cys560, Cys544-Cys558, Cys552-Cys563, Cys565-Cys574, Cys576-Cys599, Cys583-Cys597, Cys591-Cys602, Cys604-Cys614, Cys617-Cys620, Cys624-Cys670, Cys630-Cys649, Cys633-Cys645, and Cys678-Cys702. N-linked (GlcNAc...) asparagine glycosylation is found at Asn48 and Asn97. One can recognise a VWFA domain in the interval 131–371 (YPVDLYYLMD…QLIISAYEEL (241 aa)). Mg(2+) contacts are provided by Asp140, Ser142, and Ser144. Ca(2+) is bound by residues Ser144, Asp147, Asp148, and Glu179. Positions 235, 237, 239, and 240 each coordinate Ca(2+). Glu240 is a Mg(2+) binding site. N-linked (GlcNAc...) asparagine glycosylation is present at Asn260. Ca(2+)-binding residues include Asp271 and Lys355. The N-linked (GlcNAc...) asparagine glycan is linked to Asn387. Asn418 is a glycosylation site (N-linked (GlcNAc...) asparagine). I-EGF domains lie at 456–491 (CQKE…PHCE), 492–538 (CGED…PYCQ), 539–575 (CDDF…EYCN), and 576–615 (CTTS…LTCE). N-linked (GlcNAc...) asparagine glycosylation is found at Asn463 and Asn471. The chain crosses the membrane as a helical span at residues 710–730 (MIMLGVSLAILLIGVVLLCIW). Residues 731–758 (KLLVSFHDRKEVAKFEAERSKAKWQTGT) form an interaction with HAX1 region. Residues 731-788 (KLLVSFHDRKEVAKFEAERSKAKWQTGTNPLYRGSTSTFKNVTYKHREKQKVDLSMDG) lie on the Cytoplasmic side of the membrane.

It belongs to the integrin beta chain family. Heterodimer of an alpha and a beta subunit. Interacts with FLNB. Interacts with HAX1. ITGAV:ITGB6 interacts with FBN1. ITGAV:ITGB6 interacts with TGFB1.

The protein resides in the cell membrane. It localises to the cell junction. Its subcellular location is the focal adhesion. Integrin alpha-V:beta-6 (ITGAV:ITGB6) is a receptor for fibronectin and cytotactin. It recognizes the sequence R-G-D in its ligands. ITGAV:ITGB6 acts as a receptor for fibrillin-1 (FBN1) and mediates R-G-D-dependent cell adhesion to FBN1. Integrin alpha-V:beta-6 (ITGAV:ITGB6) mediates R-G-D-dependent release of transforming growth factor beta-1 (TGF-beta-1) from regulatory Latency-associated peptide (LAP), thereby playing a key role in TGF-beta-1 activation. The chain is Integrin beta-6 (ITGB6) from Sus scrofa (Pig).